The primary structure comprises 188 residues: Probable RNA-binding protein 18 (188 aa).

Positions 23–104 (HRLWIGNIDP…KKLVVRWAHA (82 aa)) constitute an RRM domain. A disordered region spans residues 151–188 (EENPDDYSGPSAYTYNKPPDKREKRSQPYHKHFRKHRR). The segment covering 177–188 (QPYHKHFRKHRR) has biased composition (basic residues).

This chain is Probable RNA-binding protein 18 (rbm18), found in Danio rerio (Zebrafish).